We begin with the raw amino-acid sequence, 896 residues long: Protein translocase subunit SecA (896 aa).

Residues Q87, G105–T109, and D507 contribute to the ATP site. Positions E853–P879 are disordered. Residues T866 to R876 show a composition bias toward basic and acidic residues. Zn(2+) contacts are provided by C880, C882, C891, and H892.

Belongs to the SecA family. In terms of assembly, monomer and homodimer. Part of the essential Sec protein translocation apparatus which comprises SecA, SecYEG and auxiliary proteins SecDF-YajC and YidC. Requires Zn(2+) as cofactor.

The protein localises to the cell inner membrane. It localises to the cytoplasm. The enzyme catalyses ATP + H2O + cellular proteinSide 1 = ADP + phosphate + cellular proteinSide 2.. In terms of biological role, part of the Sec protein translocase complex. Interacts with the SecYEG preprotein conducting channel. Has a central role in coupling the hydrolysis of ATP to the transfer of proteins into and across the cell membrane, serving both as a receptor for the preprotein-SecB complex and as an ATP-driven molecular motor driving the stepwise translocation of polypeptide chains across the membrane. The sequence is that of Protein translocase subunit SecA from Legionella pneumophila subsp. pneumophila (strain Philadelphia 1 / ATCC 33152 / DSM 7513).